A 122-amino-acid chain; its full sequence is Large ribosomal subunit protein uL14 (122 aa).

It belongs to the universal ribosomal protein uL14 family. Part of the 50S ribosomal subunit. Forms a cluster with proteins L3 and L19. In the 70S ribosome, L14 and L19 interact and together make contacts with the 16S rRNA in bridges B5 and B8.

Functionally, binds to 23S rRNA. Forms part of two intersubunit bridges in the 70S ribosome. The protein is Large ribosomal subunit protein uL14 of Bartonella quintana (strain Toulouse) (Rochalimaea quintana).